Here is a 739-residue protein sequence, read N- to C-terminus: Tegument protein UL47 (739 aa).

Over residues 1 to 13 (MDAARDGRPERRR) the composition is skewed to basic and acidic residues. Disordered stretches follow at residues 1–123 (MDAA…QDYL) and 154–198 (QFPP…DDAA). The Nuclear localization signal motif lies at 10–30 (ERRRAVSGTYRTHPFQRPSAR). Residues 28-53 (SARRSAGRPARCGRRGRGAPRVRRPR) show a composition bias toward basic residues. Over residues 62–87 (EDTSEDENVYDYIDGDSSDSADDYDS) the composition is skewed to acidic residues. Positions 94 to 121 (RGPNHGAGDAMDTDAPPERAPEGGAPQD) match the Nuclear export signal motif. A Nuclear export signal motif is present at residues 483–493 (LSAYLTLFVAL).

This sequence belongs to the alphaherpesvirinae HHV-1 UL47 family. In terms of assembly, interacts with US3 kinase. Interacts with UL31 and UL34; these interactions seem important for efficient virion nuclear egress. Interacts with UL41/VHS. Interacts with host DDB1. Post-translationally, monoubiquitinated. Phosphorylated by US3. This phosphorylation is required for proper nuclear localization.

The protein resides in the virion tegument. Its subcellular location is the host nucleus. It localises to the host cytoplasm. Tegument protein that can bind to various RNA transcripts. Plays a role in the attenuation of selective viral and cellular mRNA degradation by modulating the activity of host shutoff RNase UL41/VHS. Also plays a role in the primary envelopment of virions in the perinuclear space, probably by interacting with two nuclear egress proteins UL31 and UL34. In Bovine herpesvirus 1.1 (strain Cooper) (BoHV-1), this protein is Tegument protein UL47.